The chain runs to 165 residues: Large ribosomal subunit protein uL11 (165 aa).

Arg-67 is subject to N5-methylarginine.

It belongs to the universal ribosomal protein uL11 family. As to quaternary structure, component of the large ribosomal subunit (LSU). Mature N.crassa ribosomes consist of a small (40S) and a large (60S) subunit. The 40S small subunit contains 1 molecule of ribosomal RNA (18S rRNA) and at least 32 different proteins. The large 60S subunit contains 3 rRNA molecules (26S, 5.8S and 5S rRNA) and at least 42 different proteins.

The protein localises to the cytoplasm. In terms of biological role, component of the ribosome, a large ribonucleoprotein complex responsible for the synthesis of proteins in the cell. The small ribosomal subunit (SSU) binds messenger RNAs (mRNAs) and translates the encoded message by selecting cognate aminoacyl-transfer RNA (tRNA) molecules. The large subunit (LSU) contains the ribosomal catalytic site termed the peptidyl transferase center (PTC), which catalyzes the formation of peptide bonds, thereby polymerizing the amino acids delivered by tRNAs into a polypeptide chain. The nascent polypeptides leave the ribosome through a tunnel in the LSU and interact with protein factors that function in enzymatic processing, targeting, and the membrane insertion of nascent chains at the exit of the ribosomal tunnel. In Neurospora crassa (strain ATCC 24698 / 74-OR23-1A / CBS 708.71 / DSM 1257 / FGSC 987), this protein is Large ribosomal subunit protein uL11 (rpl-12).